The following is a 246-amino-acid chain: Probable septum site-determining protein MinC (246 aa).

Belongs to the MinC family. In terms of assembly, interacts with MinD and FtsZ.

Its function is as follows. Cell division inhibitor that blocks the formation of polar Z ring septums. Rapidly oscillates between the poles of the cell to destabilize FtsZ filaments that have formed before they mature into polar Z rings. Prevents FtsZ polymerization. This is Probable septum site-determining protein MinC from Pseudomonas savastanoi pv. phaseolicola (strain 1448A / Race 6) (Pseudomonas syringae pv. phaseolicola (strain 1448A / Race 6)).